The following is a 345-amino-acid chain: Selenide, water dikinase (345 aa).

Cys-16 is an active-site residue. ATP contacts are provided by residues Lys-19 and Thr-45–Glu-47. Position 48 (Asp-48) interacts with Mg(2+). ATP-binding positions include Asp-65, Asp-88, and Gly-136 to Thr-138. Residue Asp-88 coordinates Mg(2+). Asp-224 provides a ligand contact to Mg(2+).

It belongs to the selenophosphate synthase 1 family. Class I subfamily. As to quaternary structure, homodimer. Mg(2+) serves as cofactor.

The enzyme catalyses hydrogenselenide + ATP + H2O = selenophosphate + AMP + phosphate + 2 H(+). In terms of biological role, synthesizes selenophosphate from selenide and ATP. This Aliarcobacter butzleri (strain RM4018) (Arcobacter butzleri) protein is Selenide, water dikinase.